The following is a 58-amino-acid chain: Photosystem II reaction center protein K (58 aa).

Positions 1-21 (MFNAYLDTVLDLSANGTVILA) are excised as a propeptide. A helical transmembrane segment spans residues 29 to 49 (IFDPIVDVMPIIPVFFLLLAF).

It belongs to the PsbK family. As to quaternary structure, PSII is composed of 1 copy each of membrane proteins PsbA, PsbB, PsbC, PsbD, PsbE, PsbF, PsbH, PsbI, PsbJ, PsbK, PsbL, PsbM, PsbT, PsbX, PsbY, PsbZ, Psb30/Ycf12, at least 3 peripheral proteins of the oxygen-evolving complex and a large number of cofactors. It forms dimeric complexes.

The protein localises to the plastid. It localises to the chloroplast thylakoid membrane. One of the components of the core complex of photosystem II (PSII). PSII is a light-driven water:plastoquinone oxidoreductase that uses light energy to abstract electrons from H(2)O, generating O(2) and a proton gradient subsequently used for ATP formation. It consists of a core antenna complex that captures photons, and an electron transfer chain that converts photonic excitation into a charge separation. The chain is Photosystem II reaction center protein K from Staurastrum punctulatum (Green alga).